Reading from the N-terminus, the 484-residue chain is 60S ribosome subunit biogenesis protein NOP8 (484 aa).

An RRM domain is found at 7-83; the sequence is KRIFVGNIFH…NILKVDEAKP (77 aa). Serine 234, serine 239, and serine 268 each carry phosphoserine. The interval 260-330 is disordered; that stretch reads DKPMTLNDSD…EGDGQEDNEF (71 aa). Positions 320 to 329 are enriched in acidic residues; it reads DEGDGQEDNE. Serine 370 bears the Phosphoserine mark.

As to quaternary structure, interacts with NIP7 and RRP43. Together with DBP6, URB1, URB2 and RSA3, forms an RNA-independent complex, which is required during early maturation of nascent 60S ribosomal subunits.

The protein resides in the nucleus. Its subcellular location is the nucleolus. Functionally, required for 60S ribosomal subunit synthesis. May be involved in assembly reactions occurring within late pre-ribosomal particles. The polypeptide is 60S ribosome subunit biogenesis protein NOP8 (NOP8) (Saccharomyces cerevisiae (strain ATCC 204508 / S288c) (Baker's yeast)).